We begin with the raw amino-acid sequence, 372 residues long: Glutamate 5-kinase (372 aa).

Lysine 14 provides a ligand contact to ATP. Positions 54, 141, and 153 each coordinate substrate. ATP is bound at residue 173 to 174; sequence TD. The PUA domain occupies 280 to 358; the sequence is AGRIVLDQGA…TDILSILGFV (79 aa).

Belongs to the glutamate 5-kinase family.

The protein resides in the cytoplasm. The catalysed reaction is L-glutamate + ATP = L-glutamyl 5-phosphate + ADP. It participates in amino-acid biosynthesis; L-proline biosynthesis; L-glutamate 5-semialdehyde from L-glutamate: step 1/2. Its function is as follows. Catalyzes the transfer of a phosphate group to glutamate to form L-glutamate 5-phosphate. In Herminiimonas arsenicoxydans, this protein is Glutamate 5-kinase.